The following is a 140-amino-acid chain: MAIERTLSIIKPDATKRNLTGKINAKFEDAGLRIVAQKRIHLTKAQAGVFYAVHAERPFYDELCEFMASEPVVVQVLEGEGAIAKNREVMGATNPADAAPGTIRAEFAESVGENSVHGSDAPETAAVEIAYFFSGLELVG.

ATP-binding residues include Lys-11, Phe-59, Arg-87, Thr-93, Arg-104, and Asn-114. Residue His-117 is the Pros-phosphohistidine intermediate of the active site.

Belongs to the NDK family. Homotetramer. Mg(2+) serves as cofactor.

The protein resides in the cytoplasm. It carries out the reaction a 2'-deoxyribonucleoside 5'-diphosphate + ATP = a 2'-deoxyribonucleoside 5'-triphosphate + ADP. It catalyses the reaction a ribonucleoside 5'-diphosphate + ATP = a ribonucleoside 5'-triphosphate + ADP. Major role in the synthesis of nucleoside triphosphates other than ATP. The ATP gamma phosphate is transferred to the NDP beta phosphate via a ping-pong mechanism, using a phosphorylated active-site intermediate. The polypeptide is Nucleoside diphosphate kinase (Dinoroseobacter shibae (strain DSM 16493 / NCIMB 14021 / DFL 12)).